A 149-amino-acid chain; its full sequence is Sec-independent protein translocase protein TatB (149 aa).

The helical transmembrane segment at 1-21 (MFDIGFTELIVIGIVALVVVG) threads the bilayer. The disordered stretch occupies residues 92-149 (VDMLDKSVRNEPQNAQTPPQTADAEPAQPDVRQQTLPLEEPDQNRAAGEPSSTSTRPA). The segment covering 101–111 (NEPQNAQTPPQ) has biased composition (polar residues).

Belongs to the TatB family. The Tat system comprises two distinct complexes: a TatABC complex, containing multiple copies of TatA, TatB and TatC subunits, and a separate TatA complex, containing only TatA subunits. Substrates initially bind to the TatABC complex, which probably triggers association of the separate TatA complex to form the active translocon.

Its subcellular location is the cell inner membrane. Functionally, part of the twin-arginine translocation (Tat) system that transports large folded proteins containing a characteristic twin-arginine motif in their signal peptide across membranes. Together with TatC, TatB is part of a receptor directly interacting with Tat signal peptides. TatB may form an oligomeric binding site that transiently accommodates folded Tat precursor proteins before their translocation. The polypeptide is Sec-independent protein translocase protein TatB (Thiobacillus denitrificans (strain ATCC 25259 / T1)).